A 356-amino-acid polypeptide reads, in one-letter code: Histidinol-phosphate aminotransferase (356 aa).

Lys214 bears the N6-(pyridoxal phosphate)lysine mark.

This sequence belongs to the class-II pyridoxal-phosphate-dependent aminotransferase family. Histidinol-phosphate aminotransferase subfamily. Homodimer. Pyridoxal 5'-phosphate serves as cofactor.

The catalysed reaction is L-histidinol phosphate + 2-oxoglutarate = 3-(imidazol-4-yl)-2-oxopropyl phosphate + L-glutamate. The protein operates within amino-acid biosynthesis; L-histidine biosynthesis; L-histidine from 5-phospho-alpha-D-ribose 1-diphosphate: step 7/9. The sequence is that of Histidinol-phosphate aminotransferase from Shigella boydii serotype 4 (strain Sb227).